The primary structure comprises 560 residues: Dihydroxy-acid dehydratase (560 aa).

Residue aspartate 78 participates in Mg(2+) binding. Cysteine 119 serves as a coordination point for [2Fe-2S] cluster. Residues aspartate 120 and lysine 121 each coordinate Mg(2+). Lysine 121 bears the N6-carboxylysine mark. Position 192 (cysteine 192) interacts with [2Fe-2S] cluster. Glutamate 446 contacts Mg(2+). The Proton acceptor role is filled by serine 472.

The protein belongs to the IlvD/Edd family. In terms of assembly, homodimer. The cofactor is [2Fe-2S] cluster. Requires Mg(2+) as cofactor.

It catalyses the reaction (2R)-2,3-dihydroxy-3-methylbutanoate = 3-methyl-2-oxobutanoate + H2O. It carries out the reaction (2R,3R)-2,3-dihydroxy-3-methylpentanoate = (S)-3-methyl-2-oxopentanoate + H2O. Its pathway is amino-acid biosynthesis; L-isoleucine biosynthesis; L-isoleucine from 2-oxobutanoate: step 3/4. It participates in amino-acid biosynthesis; L-valine biosynthesis; L-valine from pyruvate: step 3/4. Functions in the biosynthesis of branched-chain amino acids. Catalyzes the dehydration of (2R,3R)-2,3-dihydroxy-3-methylpentanoate (2,3-dihydroxy-3-methylvalerate) into 2-oxo-3-methylpentanoate (2-oxo-3-methylvalerate) and of (2R)-2,3-dihydroxy-3-methylbutanoate (2,3-dihydroxyisovalerate) into 2-oxo-3-methylbutanoate (2-oxoisovalerate), the penultimate precursor to L-isoleucine and L-valine, respectively. This is Dihydroxy-acid dehydratase from Anaeromyxobacter dehalogenans (strain 2CP-C).